Consider the following 551-residue polypeptide: Cytochrome P450 monooxygenase abl5 (551 aa).

A glycan (N-linked (GlcNAc...) asparagine) is linked at Asn-24. A helical membrane pass occupies residues 37 to 57; that stretch reads VVLNTLTAIVVVWICYRAVIY. 5 N-linked (GlcNAc...) asparagine glycosylation sites follow: Asn-174, Asn-218, Asn-283, Asn-307, and Asn-441. Heme is bound at residue Cys-495.

Belongs to the cytochrome P450 family. Heme is required as a cofactor.

Its subcellular location is the membrane. In terms of biological role, cytochrome P450 monooxygenase; part of the gene cluster that mediates the biosynthesis of abscisic acid (ABA), a phytohormone that acts antagonistically toward salicylic acid (SA), jasmonic acid (JA) and ethylene (ETH) signaling, to impede plant defense responses. The first step of the pathway catalyzes the reaction from farnesyl diphosphate to alpha-ionylideneethane performed by the alpha-ionylideneethane synthase abl3 via a three-step reaction mechanism involving 2 neutral intermediates, beta-farnesene and allofarnesene. The cytochrome P450 monooxygenase abl1 might then be involved in the conversion of alpha-ionylideneethane to alpha-ionylideneacetic acid. Alpha-ionylideneacetic acid is further converted to abscisic acid in 2 steps involving the cytochrome P450 monooxygenase abl2 and the short-chain dehydrogenase/reductase abl4, via the intermediates 1'-deoxy-ABA or 1',4'-trans-diol-ABA, depending on the order of action of these 2 enzymes. Abl2 is responsible for the hydroxylation of carbon atom C-1' and abl4 might be involved in the oxidation of the C-4' carbon atom. The cytochrome monooxygenase abl5 seems not essential for the biosynthesis of ABA and its function remains to be identified. This is Cytochrome P450 monooxygenase abl5 from Leptosphaeria maculans (strain JN3 / isolate v23.1.3 / race Av1-4-5-6-7-8) (Blackleg fungus).